The following is a 511-amino-acid chain: Maturase K (511 aa).

It belongs to the intron maturase 2 family. MatK subfamily.

The protein localises to the plastid. It localises to the chloroplast. Its function is as follows. Usually encoded in the trnK tRNA gene intron. Probably assists in splicing its own and other chloroplast group II introns. This chain is Maturase K, found in Lolium perenne (Perennial ryegrass).